The primary structure comprises 1228 residues: Structural maintenance of chromosomes protein 1 (1228 aa).

Residue 32 to 39 coordinates ATP; it reads GPNGAGKS. The stretch at 197 to 510 forms a coiled coil; the sequence is NKKRGINAEL…ESKQDAKKRE (314 aa). An SMC hinge domain is found at 522–635; it reads VKGRIIDLCT…CDSMTVARDL (114 aa). Coiled-coil stretches lie at residues 710-783, 814-926, and 984-1068; these read KLHS…KIFS, EFTK…EIDR, and VEVD…KRLQ.

It belongs to the SMC family. SMC1 subfamily. In terms of assembly, cohesin complexes are composed of the psm1/smc1 and psm3/smc3 heterodimer attached via their SMC hinge domain, rad21/scc1 which link them, and psc3/scc3, which interacts with rad21.

Its subcellular location is the nucleus. It is found in the chromosome. In terms of biological role, involved in chromosome cohesion during cell cycle and in DNA repair. Central component of cohesin complex. The cohesin complex is required for the cohesion of sister chromatids after DNA replication. The cohesin complex apparently forms a large proteinaceous ring within which sister chromatids can be trapped. At anaphase, the complex is cleaved and dissociates from chromatin, allowing sister chromatids to segregate. The chain is Structural maintenance of chromosomes protein 1 (psm1) from Schizosaccharomyces pombe (strain 972 / ATCC 24843) (Fission yeast).